A 248-amino-acid chain; its full sequence is Zinc finger CCCH domain-containing protein 36 (248 aa).

2 disordered regions span residues 1–37 (MDTR…GLGS) and 87–110 (MQGS…VSNF). The segment at 36 to 64 (GSKSKPCTKFFSTSGCPFGENCHFLHYVP) adopts a C3H1-type 1 zinc-finger fold. The span at 90–103 (SGNGGRFSGRGESG) shows a compositional bias: gly residues. The KH domain maps to 113-177 (SATARFSVDA…EQISEASAMV (65 aa)). The interval 188–209 (AKKPPGGGLGGGGGMGSEGKPH) is disordered. A compositionally biased stretch (gly residues) spans 192–204 (PGGGLGGGGGMGS). A C3H1-type 2 zinc finger spans residues 213–240 (NFKTKICERFSKGNCTFGDRCHFAHGEA).

This Arabidopsis thaliana (Mouse-ear cress) protein is Zinc finger CCCH domain-containing protein 36.